The following is a 220-amino-acid chain: Tumor protein D54 (220 aa).

An N-acetylmethionine modification is found at Met1. Phosphoserine occurs at positions 3, 12, and 19. Residues 40-82 (GLTEGEEEELRAELAKVEEEIVTLRQVLAAKERHCGELKRRLG) are a coiled coil. Phosphoserine occurs at positions 96, 149, 168, and 175. The residue at position 177 (Thr177) is a Phosphothreonine. A Phosphoserine modification is found at Ser180. Thr187 carries the post-translational modification Phosphothreonine. Residues 189–220 (KSKVVGGRENGSDNLPPSPGSGDQTLPDHAPF) are disordered. Phosphoserine occurs at positions 206 and 209.

Belongs to the TPD52 family. Forms a homodimer or heterodimer with other members of the family. Interacts with MAL2.

This chain is Tumor protein D54 (Tpd52l2), found in Mus musculus (Mouse).